Here is a 472-residue protein sequence, read N- to C-terminus: MAGKTLYDKLWDDHVVTQRDDGSCLLYIDRHLLHEVTSPQAFEGLQLAGRQPWRLSANVATPDHNVPTSKKERDQGIAGIEDDTSRIQVQTLDDNCKAFYIVEFGINDIRQGIVHVVGPEQGLTLPGMTVVCGDSHTATHGAFGCLAHGIGTSEVEHVLATQCLVQKKSKNMLVRVDGVLGKGVTPKDVVLAIIGKIGTAGGTGYAIEFGGQVFRDMSIEGRMTVCNMAIEAGARVGMVAVDDKTIEYVKGRSYAPKGEQWEQAVAYWNTLHSDDDAVFDAVVELNGAEIEPQVSWGTSPEMVIPVSKAVPTLEQAKDDVQRNDWTRAYQYMGLNAGQALADIQLDRVFIGSCTNSRIEDIRAAAEVVKGRKVAPSIKQAMIVPGSGLVKQQAEKEGLDKIFLEAGFEWREPGCSMCLAMNADKLQPGEHCASTSNRNFEGRQGNGGRTHLVSPAMAAAAAIAGHFVDVRSF.

Positions 353, 414, and 417 each coordinate [4Fe-4S] cluster.

This sequence belongs to the aconitase/IPM isomerase family. LeuC type 1 subfamily. As to quaternary structure, heterodimer of LeuC and LeuD. [4Fe-4S] cluster is required as a cofactor.

It carries out the reaction (2R,3S)-3-isopropylmalate = (2S)-2-isopropylmalate. Its pathway is amino-acid biosynthesis; L-leucine biosynthesis; L-leucine from 3-methyl-2-oxobutanoate: step 2/4. Catalyzes the isomerization between 2-isopropylmalate and 3-isopropylmalate, via the formation of 2-isopropylmaleate. The chain is 3-isopropylmalate dehydratase large subunit from Acinetobacter baumannii (strain AB0057).